A 468-amino-acid polypeptide reads, in one-letter code: MATGADVRDILELGGPEGDAASGTISKKDIINPDKKKSKKSSETLTFKRPEGMHREVYALLYSDKKDAPPLLPSDTGQGYRTVKAKLGSKKVRPWKWMPFTNPARKDGAMFFHWRRAAEEGKDYPFARFNKTVQVPVYSEQEYQLYLHDDAWTKAETDHLFDLSRRFDLRFVVIHDRYDHQQFKKRSVEDLKERYYHICAKLANVRAVPGTDLKIPVFDAGHERRRKEQLERLYNRTPEQVAEEEYLLQELRKIEARKKEREKRSQDLQKLITAADTTAEQRRTERKAPKKKLPQKKEAEKPAVPETAGIKFPDFKSAGVTLRSQRMKLPSSVGQKKIKALEQMLLELGVELSPTPTEELVHMFNELRSDLVLLYELKQACANCEYELQMLRHRHEALARAGVLGAPAAAAVGPTPASAEPTVSESGLGLDPTKDTIIDVVGAPLTPNSRKRRESASSSSSVKKAKKP.

Basic and acidic residues-rich tracts occupy residues 1-11 and 26-48; these read MATGADVRDIL and SKKDIINPDKKKSKKSSETLTFK. Residues 1–48 are disordered; the sequence is MATGADVRDILELGGPEGDAASGTISKKDIINPDKKKSKKSSETLTFK. A Glycyl lysine isopeptide (Lys-Gly) (interchain with G-Cter in SUMO2) cross-link involves residue lysine 27. Residues 149-199 form the SANT domain; sequence DDAWTKAETDHLFDLSRRFDLRFVVIHDRYDHQQFKKRSVEDLKERYYHIC. Lysine 214 participates in a covalent cross-link: Glycyl lysine isopeptide (Lys-Gly) (interchain with G-Cter in SUMO2). Residues 225–275 adopt a coiled-coil conformation; it reads RRKEQLERLYNRTPEQVAEEEYLLQELRKIEARKKEREKRSQDLQKLITAA. Residues 258–267 show a composition bias toward basic and acidic residues; that stretch reads KKEREKRSQD. Disordered stretches follow at residues 258-305 and 411-468; these read KKER…PAVP and AVGP…AKKP. Threonine 446 is modified (phosphothreonine). A Phosphoserine modification is found at serine 449.

In terms of assembly, component of the NuA4 histone acetyltransferase complex which contains the catalytic subunit KAT5/TIP60 and the subunits EP400, TRRAP/PAF400, BRD8/SMAP, EPC1, DMAP1/DNMAP1, RUVBL1/TIP49, RUVBL2, ING3, actin, ACTL6A/BAF53A, MORF4L1/MRG15, MORF4L2/MRGX, MRGBP, YEATS4/GAS41, VPS72/YL1 and MEAF6. Component of a NuA4-related complex which contains EP400, TRRAP/PAF400, SRCAP, BRD8/SMAP, EPC1, DMAP1/DNMAP1, RUVBL1/TIP49, RUVBL2, actin, ACTL6A/BAF53A, VPS72 and YEATS4/GAS41. DMAP1 also forms a complex with DNMT1 and HDAC2. Throughout S phase it interacts directly with the N-terminus of DNMT1, which serves to recruit DMAP1 to replication foci. DMAP1 interacts with ING1, a component of the mSIN3A transcription repressor complex, although this interaction is not required for recruitment of ING1 to heterochromatin. Interacts directly with the transcriptional corepressor TSG101. Interacts with URI1. Interacts with the pro-apoptotic protein DAXX.

It is found in the nucleus. Its subcellular location is the cytoplasm. Functionally, involved in transcription repression and activation. Its interaction with HDAC2 may provide a mechanism for histone deacetylation in heterochromatin following replication of DNA at late firing origins. Can also repress transcription independently of histone deacetylase activity. May specifically potentiate DAXX-mediated repression of glucocorticoid receptor-dependent transcription. Component of the NuA4 histone acetyltransferase (HAT) complex which is involved in transcriptional activation of select genes principally by acetylation of nucleosomal histones H4 and H2A. This modification may both alter nucleosome - DNA interactions and promote interaction of the modified histones with other proteins which positively regulate transcription. This complex may be required for the activation of transcriptional programs associated with oncogene and proto-oncogene mediated growth induction, tumor suppressor mediated growth arrest and replicative senescence, apoptosis, and DNA repair. NuA4 may also play a direct role in DNA repair when recruited to sites of DNA damage. Participates in the nuclear localization of URI1 and increases its transcriptional corepressor activity. This Mus musculus (Mouse) protein is DNA methyltransferase 1-associated protein 1 (Dmap1).